A 251-amino-acid chain; its full sequence is Fibroblast growth factor 23 (251 aa).

Residues 1 to 24 (MLGARLRLWVCALCSVCSMSVLRA) form the signal peptide. A disulfide bridge connects residues Cys95 and Cys113. Residues Thr171 and Thr178 are each glycosylated (O-linked (GalNAc) threonine). The segment at 172–221 (PIPRRHTRSAEDDSERDPLNVLKPRARMTPAPASCSQELPSAEDNSPMAS) is disordered. Position 180 is a phosphoserine; by FAM20C (Ser180). The segment covering 205 to 219 (SCSQELPSAEDNSPM) has biased composition (polar residues).

This sequence belongs to the heparin-binding growth factors family. Interacts with FGFR1, FGFR2, FGFR3 and FGFR4. Affinity between fibroblast growth factors (FGFs) and their receptors is increased by KL and heparan sulfate glycosaminoglycans that function as coreceptors. Following secretion this protein is inactivated by cleavage into a N-terminal fragment and a C-terminal fragment. The processing is effected by proprotein convertases. In terms of processing, O-glycosylated at Thr-171 and Thr-178 by GALNT3 and glycosylation of Thr-178 requires previous glycosylation at Thr171. Glycosylation is necessary for secretion; it blocks processing by proprotein convertases when the O-glycan is alpha 2,6-sialylated. Competition between proprotein convertase cleavage and block of cleavage by O-glycosylation determines the level of secreted active FGF23. Post-translationally, phosphorylation at Ser-180 mediated by FAM20C slows down glycosylation at Thr-178 notably. In terms of tissue distribution, expressed in osteogenic cells particularly during phases of active bone remodeling. In adult trabecular bone, expressed in osteocytes and flattened bone-lining cells (inactive osteoblasts).

The protein resides in the secreted. Its function is as follows. Regulator of phosphate homeostasis. Inhibits renal tubular phosphate transport by reducing SLC34A1 levels. Up-regulates EGR1 expression in the presence of KL. Acts directly on the parathyroid to decrease PTH secretion. Regulator of vitamin-D metabolism. Negatively regulates osteoblast differentiation and matrix mineralization. The chain is Fibroblast growth factor 23 (FGF23) from Homo sapiens (Human).